A 489-amino-acid chain; its full sequence is Leukocyte immunoglobulin-like receptor subfamily A member 1 (489 aa).

The signal sequence occupies residues 1–16 (MTPIVTVLICLRLSLG). Residues 17–461 (PRTHVQAGTL…SHPQDYTVEN (445 aa)) are Extracellular-facing. 4 consecutive Ig-like C2-type domains span residues 27-116 (PKPT…PLEL), 119-224 (TGAY…GVSK), 226-315 (PSLS…DPLD), and 326-415 (PFIS…SDSL). A disulfide bond links Cys-49 and Cys-98. A glycan (N-linked (GlcNAc...) asparagine) is linked at Asn-140. Disulfide bonds link Cys-145–Cys-197, Cys-157–Cys-167, and Cys-246–Cys-297. Asn-281, Asn-302, and Asn-341 each carry an N-linked (GlcNAc...) asparagine glycan. Cys-346 and Cys-397 form a disulfide bridge. The interval 425–453 (TLSPPQNKSDSKAGAANTLSPSQNKTASH) is disordered. N-linked (GlcNAc...) asparagine glycans are attached at residues Asn-431 and Asn-448. Over residues 441–453 (NTLSPSQNKTASH) the composition is skewed to polar residues. Residues 462-482 (LIRMGIAGLVLVVLGILLFEA) traverse the membrane as a helical segment. Residues 483–489 (QHSQRSL) lie on the Cytoplasmic side of the membrane.

As to expression, detected in monocytes and B-cells.

It localises to the membrane. Functionally, may act as receptor for class I MHC antigens. The chain is Leukocyte immunoglobulin-like receptor subfamily A member 1 (LILRA1) from Homo sapiens (Human).